Consider the following 457-residue polypeptide: Embryogenesis-associated protein EMB8 (457 aa).

A disordered region spans residues 39-59 (KKPAAGACEEQDELTSGSAAR). Residues 151-391 (PVLILLPGLT…LVVTPNGGHL (241 aa)) enclose the AB hydrolase-1 domain. Active-site charge relay system residues include serine 231, aspartate 361, and histidine 390. Basic and acidic residues predominate over residues 438–447 (VDSVHTRETN). A disordered region spans residues 438–457 (VDSVHTRETNNYKSPIENVN). The segment covering 448–457 (NYKSPIENVN) has biased composition (polar residues).

It belongs to the AB hydrolase superfamily. AB hydrolase 4 family.

This is Embryogenesis-associated protein EMB8 (EMB8) from Picea glauca (White spruce).